A 294-amino-acid chain; its full sequence is ATP synthase gamma chain (294 aa).

It belongs to the ATPase gamma chain family. F-type ATPases have 2 components, CF(1) - the catalytic core - and CF(0) - the membrane proton channel. CF(1) has five subunits: alpha(3), beta(3), gamma(1), delta(1), epsilon(1). CF(0) has three main subunits: a, b and c.

The protein resides in the cell inner membrane. Functionally, produces ATP from ADP in the presence of a proton gradient across the membrane. The gamma chain is believed to be important in regulating ATPase activity and the flow of protons through the CF(0) complex. This Campylobacter jejuni subsp. jejuni serotype O:2 (strain ATCC 700819 / NCTC 11168) protein is ATP synthase gamma chain.